Reading from the N-terminus, the 432-residue chain is Serine hydroxymethyltransferase (432 aa).

Residues leucine 127 and 131-133 (GHL) contribute to the (6S)-5,6,7,8-tetrahydrofolate site. N6-(pyridoxal phosphate)lysine is present on lysine 236.

This sequence belongs to the SHMT family. In terms of assembly, homodimer. Pyridoxal 5'-phosphate is required as a cofactor.

The protein resides in the cytoplasm. It carries out the reaction (6R)-5,10-methylene-5,6,7,8-tetrahydrofolate + glycine + H2O = (6S)-5,6,7,8-tetrahydrofolate + L-serine. It participates in one-carbon metabolism; tetrahydrofolate interconversion. Its pathway is amino-acid biosynthesis; glycine biosynthesis; glycine from L-serine: step 1/1. Functionally, catalyzes the reversible interconversion of serine and glycine with tetrahydrofolate (THF) serving as the one-carbon carrier. This reaction serves as the major source of one-carbon groups required for the biosynthesis of purines, thymidylate, methionine, and other important biomolecules. Also exhibits THF-independent aldolase activity toward beta-hydroxyamino acids, producing glycine and aldehydes, via a retro-aldol mechanism. The chain is Serine hydroxymethyltransferase from Rhizobium johnstonii (strain DSM 114642 / LMG 32736 / 3841) (Rhizobium leguminosarum bv. viciae).